Reading from the N-terminus, the 269-residue chain is Chymotrypsin-like elastase family member 2A (269 aa).

The signal sequence occupies residues 1 to 16 (MIRTLLLSTLVAGALS). The propeptide at 17–28 (CGDPTYPPYVTR) is activation peptide. Positions 29–267 (VVGGEEARPN…YIDWINSVIA (239 aa)) constitute a Peptidase S1 domain. A disulfide bridge links Cys-58 with Cys-74. Residues His-73 and Asp-121 each act as charge relay system in the active site. Cystine bridges form between Cys-155–Cys-222, Cys-186–Cys-202, and Cys-212–Cys-243. Residue Ser-216 is the Charge relay system of the active site.

This sequence belongs to the peptidase S1 family. Elastase subfamily. Interacts with CPA1. Interacts with SERPINA1. Expressed in pancreas. Not detected in keratinocytes. Detected in exocrine secretions of the pancreas (at protein level). Also expressed in a small fraction of cells in pancreatic islets, adrenal cortex, intestinal glands and colonic lymphoid follicles (at protein level). Detected in plasma.

It is found in the secreted. The enzyme catalyses Preferential cleavage: Leu-|-Xaa, Met-|-Xaa and Phe-|-Xaa. Hydrolyzes elastin.. Its function is as follows. Elastase that enhances insulin signaling and might have a physiologic role in cellular glucose metabolism. Circulates in plasma and reduces platelet hyperactivation, triggers both insulin secretion and degradation, and increases insulin sensitivity. The chain is Chymotrypsin-like elastase family member 2A from Homo sapiens (Human).